Reading from the N-terminus, the 360-residue chain is Peptide chain release factor 1 (360 aa).

Gln-235 is modified (N5-methylglutamine). Residues 284 to 313 (AKRQQAEASTRRNLLGSGDRSDRNRTYNFP) are disordered.

The protein belongs to the prokaryotic/mitochondrial release factor family. In terms of processing, methylated by PrmC. Methylation increases the termination efficiency of RF1.

The protein resides in the cytoplasm. In terms of biological role, peptide chain release factor 1 directs the termination of translation in response to the peptide chain termination codons UAG and UAA. This chain is Peptide chain release factor 1, found in Citrobacter koseri (strain ATCC BAA-895 / CDC 4225-83 / SGSC4696).